Here is a 293-residue protein sequence, read N- to C-terminus: Energy-coupling factor transporter ATP-binding protein EcfA2 (293 aa).

The ABC transporter domain maps to 3 to 246 (ITFQKVEHRY…ADELEKIGVD (244 aa)). 40–47 (GHTGSGKS) contributes to the ATP binding site.

This sequence belongs to the ABC transporter superfamily. Energy-coupling factor EcfA family. Forms a stable energy-coupling factor (ECF) transporter complex composed of 2 membrane-embedded substrate-binding proteins (S component), 2 ATP-binding proteins (A component) and 2 transmembrane proteins (T component).

The protein resides in the cell membrane. Its function is as follows. ATP-binding (A) component of a common energy-coupling factor (ECF) ABC-transporter complex. Unlike classic ABC transporters this ECF transporter provides the energy necessary to transport a number of different substrates. This Bacillus cereus (strain ATCC 10987 / NRS 248) protein is Energy-coupling factor transporter ATP-binding protein EcfA2.